We begin with the raw amino-acid sequence, 261 residues long: Enolase-phosphatase E1 (261 aa).

Asp-16 and Glu-18 together coordinate Mg(2+). Residues Ser-153–Ser-154 and Lys-187 each bind substrate. Asp-212 is a binding site for Mg(2+).

Belongs to the HAD-like hydrolase superfamily. MasA/MtnC family. As to quaternary structure, monomer. It depends on Mg(2+) as a cofactor.

It localises to the cytoplasm. The protein localises to the nucleus. It carries out the reaction 5-methylsulfanyl-2,3-dioxopentyl phosphate + H2O = 1,2-dihydroxy-5-(methylsulfanyl)pent-1-en-3-one + phosphate. It participates in amino-acid biosynthesis; L-methionine biosynthesis via salvage pathway; L-methionine from S-methyl-5-thio-alpha-D-ribose 1-phosphate: step 3/6. Its pathway is amino-acid biosynthesis; L-methionine biosynthesis via salvage pathway; L-methionine from S-methyl-5-thio-alpha-D-ribose 1-phosphate: step 4/6. Functionally, bifunctional enzyme that catalyzes the enolization of 2,3-diketo-5-methylthiopentyl-1-phosphate (DK-MTP-1-P) into the intermediate 2-hydroxy-3-keto-5-methylthiopentenyl-1-phosphate (HK-MTPenyl-1-P), which is then dephosphorylated to form the acireductone 1,2-dihydroxy-3-keto-5-methylthiopentene (DHK-MTPene). This is Enolase-phosphatase E1 (enoph1) from Salmo salar (Atlantic salmon).